Consider the following 455-residue polypeptide: UDP-N-acetylmuramoylalanine--D-glutamate ligase (455 aa).

Residue 117-123 (GTNGKTT) coordinates ATP.

It belongs to the MurCDEF family.

It localises to the cytoplasm. The enzyme catalyses UDP-N-acetyl-alpha-D-muramoyl-L-alanine + D-glutamate + ATP = UDP-N-acetyl-alpha-D-muramoyl-L-alanyl-D-glutamate + ADP + phosphate + H(+). It participates in cell wall biogenesis; peptidoglycan biosynthesis. Its function is as follows. Cell wall formation. Catalyzes the addition of glutamate to the nucleotide precursor UDP-N-acetylmuramoyl-L-alanine (UMA). This Alkaliphilus metalliredigens (strain QYMF) protein is UDP-N-acetylmuramoylalanine--D-glutamate ligase.